A 122-amino-acid chain; its full sequence is Large ribosomal subunit protein uL14 (122 aa).

This sequence belongs to the universal ribosomal protein uL14 family. Part of the 50S ribosomal subunit. Forms a cluster with proteins L3 and L19. In the 70S ribosome, L14 and L19 interact and together make contacts with the 16S rRNA in bridges B5 and B8.

Functionally, binds to 23S rRNA. Forms part of two intersubunit bridges in the 70S ribosome. This is Large ribosomal subunit protein uL14 from Streptococcus equi subsp. equi (strain 4047).